The chain runs to 404 residues: Nuclear receptor subfamily 2 group F member 6 (404 aa).

The span at 1–15 (MAMVTGGWGGPGGDT) shows a compositional bias: gly residues. The interval 1–49 (MAMVTGGWGGPGGDTNGVDKAGGYPRAAEDDSASPPGAASDAEPGDEER) is disordered. A compositionally biased stretch (low complexity) spans 33 to 42 (ASPPGAASDA). Phosphoserine is present on residues Ser34 and Ser40. Residues 53-128 (QVDCVVCGDK…VGMRKEAVQR (76 aa)) constitute a DNA-binding region (nuclear receptor). Residues 56–76 (CVVCGDKSSGKHYGVFTCEGC) form an NR C4-type zinc finger. Ser83 carries the phosphoserine modification. Residues 92–116 (CRSNRDCQIDQHHRNQCQYCRLKKC) form an NR C4-type zinc finger. The 229-residue stretch at 165 to 393 (PVSELIAQLL…TLIRDMLLSG (229 aa)) folds into the NR LBD domain. The tract at residues 327–404 (LQEKAQVALT…TFNWPYGSGQ (78 aa)) is important for dimerization.

The protein belongs to the nuclear hormone receptor family. NR2 subfamily. Binds DNA as dimer; homodimer and heterodimer with NR2F2 and probably NR2F1. Interacts with THRB. Expressed in heart, placenta, liver, skeletal muscle, kidney and pancreas.

Its subcellular location is the nucleus. Its function is as follows. Transcription factor predominantly involved in transcriptional repression. Binds to promoter/enhancer response elements that contain the imperfect 5'-AGGTCA-3' direct or inverted repeats with various spacings which are also recognized by other nuclear hormone receptors. Involved in modulation of hormonal responses. Represses transcriptional activity of the lutropin-choriogonadotropic hormone receptor/LHCGR gene, the renin/REN gene and the oxytocin-neurophysin/OXT gene. Represses the triiodothyronine-dependent and -independent transcriptional activity of the thyroid hormone receptor gene in a cell type-specific manner. The corepressing function towards thyroid hormone receptor beta/THRB involves at least in part the inhibition of THRB binding to triiodothyronine response elements (TREs) by NR2F6. Inhibits NFATC transcription factor DNA binding and subsequently its transcriptional activity. Acts as transcriptional repressor of IL-17 expression in Th-17 differentiated CD4(+) T cells and may be involved in induction and/or maintenance of peripheral immunological tolerance and autoimmunity. Involved in development of forebrain circadian clock; is required early in the development of the locus coeruleus (LC). This is Nuclear receptor subfamily 2 group F member 6 (NR2F6) from Homo sapiens (Human).